Reading from the N-terminus, the 354-residue chain is Trans-enoyl reductase pydC (354 aa).

Residues Ala-16 to Val-342 form the Enoyl reductase (ER) domain. Residues Cys-51–Lys-54, Ser-180–Asn-183, Tyr-198, Phe-245–Glu-246, and Val-336–Ser-337 each bind NADP(+).

It belongs to the zinc-containing alcohol dehydrogenase family. In terms of assembly, monomer.

The protein operates within mycotoxin biosynthesis. Trans-enoyl reductase; part of the gene cluster that mediates the biosynthesis of pyrrocidines, fungal natural products containing a macrocyclic para-cyclophane connected to a decahydrofluorene ring system that show potent antibiotic activities toward Gram-negative bacteria. Within the pathway, the PKS-NRPS pydA, with the help of the trans-enoyl reductase pydC, synthesize the polyketide-tyrosyl acyl thioester product which can be reductively off-loaded by the terminal reductase (R) domain in pydA. The PKS module of pydA acts in combination with the trans-acting enoyl reductase pydC to produce a methylated polyketide attached to the ACP domain. In parallel, the adenylation (A) domain of the NRPS module activated L-tyrosine, which is then transferred to the ACP domain. The condensation (C) domain subsequently link this group to the polyketide chain, forming an enzyme-bound amide. The alpha/beta hydrolase pydG is then required to catalyze the subsequent Knoevenagel condensation that affords the 3-pyrrolin-2-one ring, whereas the four proteins pydB, pydE, pydX and pydZ then function synergistically to form the cyclophane. PydB and the membrane-bound pydX and pydZ are lipid-binding proteins that can sequester and mold the pdyG product into the inverse S-shape. Binding of the medium chain reductase pydE to the complex would trigger the cascade oxidative cyclization. PydY is involved in the Diels-Alder cycloaddition that forms the decahydrofluorene core. Additional non-enzymatic hydroxylation yields pyrrocidine A2 which can be further reduced into pyrrocidine B by an endogenous reductase. This Acremonium sp protein is Trans-enoyl reductase pydC.